The chain runs to 126 residues: Small ribosomal subunit protein bS6 (126 aa).

Belongs to the bacterial ribosomal protein bS6 family.

Its function is as follows. Binds together with bS18 to 16S ribosomal RNA. The polypeptide is Small ribosomal subunit protein bS6 (Bordetella bronchiseptica (strain ATCC BAA-588 / NCTC 13252 / RB50) (Alcaligenes bronchisepticus)).